A 319-amino-acid chain; its full sequence is MAGRSDMDPPAAFSGFPALPAVAPSGPPPSPLAGAEPGREPEEAAAGRGEAAPTPAPGPGRRRRRPLQRGKPPYSYIALIAMALAHAPGRRLTLAAIYRFITERFAFYRDSPRKWQNSIRHNLTLNDCFVKVPREPGNPGKGNYWTLDPAAADMFDNGSFLRRRKRFKRAELPAHAAAAPGPPLPFPYAPYAPAPGPALLVPPPSAGPGPSPPARLFSVDSLVNLQPELAGLGAPEPPCCAAPDAAAAAFPPCAAAASPPLYSQVPDRLVLPATRPGPGPLPAEPLLALAGPAAALGPLSPGEAYLRQPGFASGLERYL.

The tract at residues 1–69 (MAGRSDMDPP…GRRRRRPLQR (69 aa)) is disordered. The segment covering 44–53 (AAAGRGEAAP) has biased composition (low complexity). The fork-head DNA-binding region spans 71-165 (KPPYSYIALI…DNGSFLRRRK (95 aa)).

Its subcellular location is the nucleus. Transcription factor that controls lens epithelial cell growth through regulation of proliferation, apoptosis and cell cycle. During lens development, controls the ratio of the lens fiber cells to the cells of the anterior lens epithelium by regulating the rate of proliferation and differentiation. Controls lens vesicle closure and subsequent separation of the lens vesicle from ectoderm. Controls the expression of DNAJB1 in a pathway that is crucial for the development of the anterior segment of the eye. The polypeptide is Forkhead box protein E3 (FOXE3) (Homo sapiens (Human)).